Here is a 203-residue protein sequence, read N- to C-terminus: Probable host range protein 2-3 (203 aa).

Positions 182–203 are disordered; the sequence is LEEEDEEKIADTGNDNQKDAED.

Belongs to the poxviridae C7 protein family.

Functionally, plays a role for multiplication of the virus in different cell types. The chain is Probable host range protein 2-3 from Myxoma virus (strain Lausanne) (MYXV).